Reading from the N-terminus, the 454-residue chain is Bifunctional protein GlmU (454 aa).

The pyrophosphorylase stretch occupies residues 1 to 225 (MNIVILAAGM…LWETLGVNSK (225 aa)). UDP-N-acetyl-alpha-D-glucosamine is bound by residues 6–9 (LAAG), Lys20, Gln71, 76–77 (GT), 98–100 (YGD), Gly135, Glu150, Asn165, and Asn223. Mg(2+) is bound at residue Asp100. Residue Asn223 coordinates Mg(2+). The interval 226 to 246 (VQLAEIERIHQRNIAQRLLEA) is linker. Residues 247 to 454 (GVTLLDPARI…WQRPVKQPKK (208 aa)) are N-acetyltransferase. Positions 329 and 347 each coordinate UDP-N-acetyl-alpha-D-glucosamine. His359 acts as the Proton acceptor in catalysis. Tyr362 and Asn373 together coordinate UDP-N-acetyl-alpha-D-glucosamine. Acetyl-CoA contacts are provided by residues Ala376, 382–383 (NY), Ser401, Ala419, and Arg436.

The protein in the N-terminal section; belongs to the N-acetylglucosamine-1-phosphate uridyltransferase family. In the C-terminal section; belongs to the transferase hexapeptide repeat family. Homotrimer. Mg(2+) is required as a cofactor.

It is found in the cytoplasm. The enzyme catalyses alpha-D-glucosamine 1-phosphate + acetyl-CoA = N-acetyl-alpha-D-glucosamine 1-phosphate + CoA + H(+). The catalysed reaction is N-acetyl-alpha-D-glucosamine 1-phosphate + UTP + H(+) = UDP-N-acetyl-alpha-D-glucosamine + diphosphate. Its pathway is nucleotide-sugar biosynthesis; UDP-N-acetyl-alpha-D-glucosamine biosynthesis; N-acetyl-alpha-D-glucosamine 1-phosphate from alpha-D-glucosamine 6-phosphate (route II): step 2/2. The protein operates within nucleotide-sugar biosynthesis; UDP-N-acetyl-alpha-D-glucosamine biosynthesis; UDP-N-acetyl-alpha-D-glucosamine from N-acetyl-alpha-D-glucosamine 1-phosphate: step 1/1. It participates in bacterial outer membrane biogenesis; LPS lipid A biosynthesis. Its function is as follows. Catalyzes the last two sequential reactions in the de novo biosynthetic pathway for UDP-N-acetylglucosamine (UDP-GlcNAc). The C-terminal domain catalyzes the transfer of acetyl group from acetyl coenzyme A to glucosamine-1-phosphate (GlcN-1-P) to produce N-acetylglucosamine-1-phosphate (GlcNAc-1-P), which is converted into UDP-GlcNAc by the transfer of uridine 5-monophosphate (from uridine 5-triphosphate), a reaction catalyzed by the N-terminal domain. This Cupriavidus metallidurans (strain ATCC 43123 / DSM 2839 / NBRC 102507 / CH34) (Ralstonia metallidurans) protein is Bifunctional protein GlmU.